The chain runs to 357 residues: Serine proteinase inhibitor 1 (357 aa).

This sequence belongs to the serpin family. Poxviruses subfamily.

The protein resides in the host cytoplasm. In terms of biological role, this viral protein may be involved in the regulation of the complement cascade. Involved in red pock formation. This chain is Serine proteinase inhibitor 1 (SPI-1), found in Oryctolagus cuniculus (Rabbit).